The primary structure comprises 185 residues: Ribosome-recycling factor (185 aa).

The protein belongs to the RRF family.

The protein resides in the cytoplasm. Its function is as follows. Responsible for the release of ribosomes from messenger RNA at the termination of protein biosynthesis. May increase the efficiency of translation by recycling ribosomes from one round of translation to another. This chain is Ribosome-recycling factor, found in Campylobacter lari (strain RM2100 / D67 / ATCC BAA-1060).